A 415-amino-acid polypeptide reads, in one-letter code: MGDEGPGSPVHLLCLAASSGVPLFCRSSSGGAPSRQQLPFSVIGSLNGVHMFGQNLDVQLNSARTEDTTVVWKNFHDSITLIVLSSEEGTSELRLERMLHMVFGAMVLIVGLEELTNIRNVERLKKELRASYCLIDSFLGNSELIGDLTQCVDCVIPPEGSAMQETLSGFAEATGTAFVSLLVSGRVVAATEGWWRLGMPEAVLLPWLVGSLPPQAARDYPVYLPHGSPTVPHRLLTLTLLRGLELCLLCGPRPPLGQLDPQLMERWWQPLLEPLRACLPLGPRALPEGFPLHSDILGLLLLHLELRRCLFTMEPSKDKEPSPEQRRRLLRNFYTLVATTHFPPEPGPAEKQEDTVYPAQMPRACYLVLGPGMGWQLVAVQLGLRLLLLLLSPHTPTHGLRSLATRTLQALTPLL.

It belongs to the fuzzy family. In terms of assembly, component of the CPLANE (ciliogenesis and planar polarity effectors) complex, composed of INTU, FUZ and WDPCP. Interacts with CPLANE1. Interacts with CPLANE2. As to expression, expressed in dermal and epidermal cells.

The protein localises to the cytoplasm. Its subcellular location is the cytoskeleton. It is found in the cilium basal body. Its function is as follows. Probable planar cell polarity effector involved in cilium biogenesis. May regulate protein and membrane transport to the cilium. Proposed to function as core component of the CPLANE (ciliogenesis and planar polarity effectors) complex involved in the recruitment of peripheral IFT-A proteins to basal bodies. May regulate the morphogenesis of hair follicles which depends on functional primary cilia. Binds phosphatidylinositol 3-phosphate with highest affinity, followed by phosphatidylinositol 4-phosphate and phosphatidylinositol 5-phosphate. The chain is Protein fuzzy homolog (Fuz) from Mus musculus (Mouse).